The sequence spans 906 residues: Protein translocase subunit SecA (906 aa).

ATP is bound by residues Q86, 104 to 108 (GEGKT), and D511. Residues 852–888 (EHESVIDNNQRHDEDEQEEAPKVKQVRREGPKVKRND) are compositionally biased toward basic and acidic residues. The interval 852-906 (EHESVIDNNQRHDEDEQEEAPKVKQVRREGPKVKRNDPCPCGSGKKYKQCHSKVE) is disordered. Zn(2+) is bound by residues C890, C892, C901, and H902. Over residues 896–906 (KKYKQCHSKVE) the composition is skewed to basic residues.

Belongs to the SecA family. Monomer and homodimer. Part of the essential Sec protein translocation apparatus which comprises SecA, SecYEG and auxiliary proteins SecDF-YajC and YidC. Zn(2+) is required as a cofactor.

Its subcellular location is the cell inner membrane. The protein resides in the cytoplasm. It catalyses the reaction ATP + H2O + cellular proteinSide 1 = ADP + phosphate + cellular proteinSide 2.. Its function is as follows. Part of the Sec protein translocase complex. Interacts with the SecYEG preprotein conducting channel. Has a central role in coupling the hydrolysis of ATP to the transfer of proteins into and across the cell membrane, serving both as a receptor for the preprotein-SecB complex and as an ATP-driven molecular motor driving the stepwise translocation of polypeptide chains across the membrane. The polypeptide is Protein translocase subunit SecA (Francisella tularensis subsp. tularensis (strain SCHU S4 / Schu 4)).